The chain runs to 248 residues: Killer cell lectin-like receptor subfamily I member 2 (248 aa).

The Cytoplasmic portion of the chain corresponds to 1–79 (MHKKKHIKHG…GIDPWLTTWQ (79 aa)). Positions 19–44 (IGTKSPTFQEKQRPSKTDQRSTVWRE) are disordered. The segment covering 28–44 (EKQRPSKTDQRSTVWRE) has biased composition (basic and acidic residues). A helical; Signal-anchor for type II membrane protein membrane pass occupies residues 80-100 (MITVILATLCIILVTKVGFLI). Residues 101–248 (PSLFSKGEKQ…KKTYICEFNI (148 aa)) are Extracellular-facing. 3 disulfides stabilise this stretch: C132–C145, C161–C244, and C223–C236. The C-type lectin domain occupies 139 to 245 (FGNNFYCVFR…CSAKKTYICE (107 aa)). Residues N197, N214, and N220 are each glycosylated (N-linked (GlcNAc...) asparagine).

In terms of assembly, heterodimer with KLRE1. In terms of tissue distribution, expressed in natural killer (NK) cells.

It localises to the cell membrane. Lectin-like receptor for natural killer (NK) cells. Heterodimer formation with KLRE1 mediates NK cell cytolytic activity. This chain is Killer cell lectin-like receptor subfamily I member 2, found in Mus musculus (Mouse).